The chain runs to 358 residues: WD repeat-containing protein 53 (358 aa).

WD repeat units lie at residues 8 to 46 (GHSS…LGHT), 92 to 131 (VNEE…ISRS), 134 to 174 (RHSN…PLWI), 195 to 234 (LNPA…CEQE), and 239 to 278 (GHSL…EKKH). Residues 278-294 (HKSPTKHTHRKKTKRAA) are compositionally biased toward basic residues. The segment at 278-309 (HKSPTKHTHRKKTKRAAYTKQGGGTHASVTGE) is disordered.

It belongs to the WD repeat WDR53 family.

The protein is WD repeat-containing protein 53 (WDR53) of Bos taurus (Bovine).